The following is a 2171-amino-acid chain: ATP-binding cassette sub-family C member Sur (2171 aa).

Residues 1–36 (MKQLFNIIHCDHLNGHVRSIYDNLNTDICGIDRVRR) lie on the Extracellular side of the membrane. A helical transmembrane segment spans residues 37–57 (VFTFFSIFLLLFGLMFVCSRY). The Cytoplasmic segment spans residues 58–71 (KKCHKTLLTFHNGR). Residues 72 to 92 (AAISLLLLALNSFDLARIFLP) traverse the membrane as a helical segment. Residues 93–112 (HQNVRNLNRLFQSSPRDLNY) are Extracellular-facing. Residues 113 to 133 (LVVIGSGELWNALFSTLLTLM) traverse the membrane as a helical segment. Residues 134 to 145 (LMLYHRMVERKK) are Cytoplasmic-facing. The helical transmembrane segment at 146–166 (ATVFLYASTAVEALTFALLSN) threads the bilayer. Residues 167–182 (ELFELVRYEDFLELQT) lie on the Extracellular side of the membrane. Residues 183–203 (CLVAMSAMCMVSLAMLDGLTV) traverse the membrane as a helical segment. At 204–224 (YKECYHDDYLDDYGKIGYKHS) the chain is on the cytoplasmic side. A helical membrane pass occupies residues 225 to 245 (MATFYSKSCFWWLTPLLWLGY). At 246 to 299 (KEPLELEDLGQMKLEDSARSHYDHFLYIYTEKKKKSNSSPSLWYCYIKNSWQMF) the chain is on the extracellular side. A helical membrane pass occupies residues 300–320 (ALGGILKLAGDLFALIGPLAI). Residues 321-447 (QKIVEYIEQL…MTEDTRNIME (127 aa)) are Cytoplasmic-facing. One can recognise an ABC transmembrane type-1 1 domain in the interval 344-622 (NEVANVLLST…FPITVPIIIA (279 aa)). A disordered region spans residues 388–434 (DSSDSAGQVQSTSSTSDEKQKNDDSMATPEHVDNPSEPNISHDIGSI). Residues 389-402 (SSDSAGQVQSTSST) show a composition bias toward polar residues. Basic and acidic residues predominate over residues 403–421 (SDEKQKNDDSMATPEHVDN). The helical transmembrane segment at 448-468 (FFLIIHYAWAIPFKIAVVIYL) threads the bilayer. Residues 469-474 (LYMNLG) are Extracellular-facing. The helical transmembrane segment at 475–495 (ISAVIGSIACIVIMTPLQFFI) threads the bilayer. Over 496 to 562 (GNAMSKNAEV…KDATFWTLMA (67 aa)) the chain is Cytoplasmic. The helical transmembrane segment at 563–583 (VLTHIATVLITFVTLGVYVWL) threads the bilayer. The Extracellular portion of the chain corresponds to 584–600 (HRDQEFDLNASRLFSSL). A helical membrane pass occupies residues 601-621 (ALFQQLTVPLLIFPITVPIII). Topologically, residues 622-1409 (AARVSTRRLE…KYGKISDDIY (788 aa)) are cytoplasmic. The 230-residue stretch at 785–1014 (VSINDGLFTW…QPRITAEWNA (230 aa)) folds into the ABC transporter 1 domain. ATP is bound at residue 822–829 (GKNGSGKT). Over residues 1141-1151 (RRRHTLGRRGS) the composition is skewed to basic residues. 2 disordered regions span residues 1141-1177 (RRRHTLGRRGSRNTNSSHRLSGLSTLTATSESSSISG) and 1209-1265 (PRVQ…DHVR). Residues 1160–1176 (LSGLSTLTATSESSSIS) are compositionally biased toward low complexity. The span at 1212–1232 (QSWQPPQHVTHHQPLSRNASS) shows a compositional bias: polar residues. Residues 1242 to 1251 (DVKKSEEARR) show a composition bias toward basic and acidic residues. The chain crosses the membrane as a helical span at residues 1410–1430 (LMYIRAAGLPIITIFFITALI). Residues 1421–1715 (ITIFFITALI…AVTKSPSELR (295 aa)) enclose the ABC transmembrane type-1 2 domain. Residues 1431–1468 (WQCLRVYTDIWLQQWSNVHGRVASKGHVVLHPSEQDHE) lie on the Extracellular side of the membrane. A helical membrane pass occupies residues 1469–1489 (VTYYFRMYAAISCVCIIMALV). The Cytoplasmic segment spans residues 1490–1558 (STPAGQYAGC…QRLLQFTLLC (69 aa)). A helical transmembrane segment spans residues 1559-1579 (LSAILINVTITPWILVLTLPI). Residues 1580 to 1655 (CGAYYLIQKF…YALLNTSHRW (76 aa)) lie on the Extracellular side of the membrane. A helical transmembrane segment spans residues 1656–1676 (LGVSLDYLGGCIVFVATVTAL). Over 1677–1718 (TAASVSCRRHYEATTSPSASASPSPFETYAVTKSPSELRPSP) the chain is Cytoplasmic. A helical membrane pass occupies residues 1719–1739 (SLVGLAINYTLLVPIYLNWVV). The Extracellular portion of the chain corresponds to 1740–2171 (KLLADMEMYA…GLLEKGASKW (432 aa)). Residues 1766–1778 (ADADADADADVDA) are compositionally biased toward acidic residues. Disordered regions lie at residues 1766–1844 (ADAD…GHEN) and 1866–1902 (NFHHPPATAGDKVEQATTKTSVIKDKQLPPQQDDKDK). Basic and acidic residues-rich tracts occupy residues 1793 to 1804 (EVDRSSQSDAGD) and 1887 to 1902 (VIKDKQLPPQQDDKDK). In terms of domain architecture, ABC transporter 2 spans 1930-2165 (IHFDNVSLRY…EGSVFRGLLE (236 aa)). 1964 to 1971 (GRTGSGKS) is an ATP binding site.

The protein belongs to the ABC transporter superfamily. ABCC family. Conjugate transporter (TC 3.A.1.208) subfamily. As to expression, highly expressed in adult heart. Detected at lower levels in head and abdomen.

It is found in the membrane. In terms of biological role, may function as regulatory subunit of ATP-sensitive potassium channels (KATP) and form KATP channels with a member of the ATP-sensitive inward rectifier potassium channel family. May also have channel activity by itself (in vitro). May protect the heart during hypoxia. May protect against heart failure under conditions of tachycardic stress. This is ATP-binding cassette sub-family C member Sur (Sur) from Drosophila melanogaster (Fruit fly).